A 498-amino-acid polypeptide reads, in one-letter code: NAD(P)H-quinone oxidoreductase chain 4, chloroplastic (498 aa).

14 helical membrane passes run 4–24 (FPWL…IVLF), 37–57 (YCIC…HFEL), 80–100 (FGID…TTLA), 112–129 (KLFY…LGTF), 134–154 (ILLF…LLSM), 167–187 (FILY…GMSL), 208–228 (ALEI…SPII), 242–262 (HYST…YGLV), 272–292 (AHSI…IYAA), 305–325 (IAYS…SISE), 330–350 (GAIL…FLAG), 386–406 (LALP…GIIT), 416–436 (ILIT…SLSI), and 463–483 (FISI…DFIF).

This sequence belongs to the complex I subunit 4 family.

The protein localises to the plastid. It is found in the chloroplast thylakoid membrane. It catalyses the reaction a plastoquinone + NADH + (n+1) H(+)(in) = a plastoquinol + NAD(+) + n H(+)(out). It carries out the reaction a plastoquinone + NADPH + (n+1) H(+)(in) = a plastoquinol + NADP(+) + n H(+)(out). This Phaseolus vulgaris (Kidney bean) protein is NAD(P)H-quinone oxidoreductase chain 4, chloroplastic.